A 116-amino-acid polypeptide reads, in one-letter code: G antigen 2B/2C (116 aa).

The segment at Met1–Cys116 is disordered. Composition is skewed to acidic residues over residues Phe31–Glu44 and Glu86–Glu95. The span at Glu102–Cys116 shows a compositional bias: basic and acidic residues.

The protein belongs to the GAGE family. Expressed in a variety of tumor tissues but not in normal tissues, except testis.

Its function is as follows. Antigen, recognized on melanoma by autologous cytolytic T-lymphocytes. This is G antigen 2B/2C (GAGE2B) from Homo sapiens (Human).